The chain runs to 417 residues: MEKFVIRGGKPLRGTVQISGAKNSAVAVLPAALLADSPSVIDNLPDIKDIETLAEIIKRLGGKVEKGKHEIKIDPTGLNSFHPPRELASRMRASYYLIGALLSKFNEAIIPMPGGCNIGVRPIDQHIKGFEALGAETTIEHGFIRIKAEKLRGAHIYFDVVSVGATINLMLAAVKAEGVTILENCAKEPHVVDVANFLNAMGANIKGAGTDTIKITGVDKLEGCHYTIIPDQIEAGTYMVAAAATGGDVYVKGVIPTHLESIIAKLVEMGVIVEEYDDVIRVRREGPLKRVDIKTLPYPGFPTDMQQPFAVLLALADGISVITENIYENRFRYLEELKKMGMKVRVEGRSAIIEGVGKLTGAPVYATDLRGGAAMVIAGLAAEGITEVLDIYHIDRGYEAMEVKLQALGADIIRIRE.

22 to 23 serves as a coordination point for phosphoenolpyruvate; that stretch reads KN. UDP-N-acetyl-alpha-D-glucosamine is bound at residue arginine 92. Residue cysteine 116 is the Proton donor of the active site. Cysteine 116 is modified (2-(S-cysteinyl)pyruvic acid O-phosphothioketal). UDP-N-acetyl-alpha-D-glucosamine contacts are provided by residues 121–125, aspartate 304, and isoleucine 326; that span reads RPIDQ.

This sequence belongs to the EPSP synthase family. MurA subfamily.

Its subcellular location is the cytoplasm. The enzyme catalyses phosphoenolpyruvate + UDP-N-acetyl-alpha-D-glucosamine = UDP-N-acetyl-3-O-(1-carboxyvinyl)-alpha-D-glucosamine + phosphate. It participates in cell wall biogenesis; peptidoglycan biosynthesis. In terms of biological role, cell wall formation. Adds enolpyruvyl to UDP-N-acetylglucosamine. In Caldanaerobacter subterraneus subsp. tengcongensis (strain DSM 15242 / JCM 11007 / NBRC 100824 / MB4) (Thermoanaerobacter tengcongensis), this protein is UDP-N-acetylglucosamine 1-carboxyvinyltransferase 3.